A 173-amino-acid polypeptide reads, in one-letter code: Regulator of ribonuclease activity A (173 aa).

This sequence belongs to the RraA family. In terms of assembly, homotrimer. Binds to both RNA-binding sites in the C-terminal region of Rne and to RhlB.

It is found in the cytoplasm. Its function is as follows. Globally modulates RNA abundance by binding to RNase E (Rne) and regulating its endonucleolytic activity. Can modulate Rne action in a substrate-dependent manner by altering the composition of the degradosome. Modulates RNA-binding and helicase activities of the degradosome. This chain is Regulator of ribonuclease activity A, found in Vibrio vulnificus (strain YJ016).